We begin with the raw amino-acid sequence, 215 residues long: Protein ERP2 (215 aa).

Residues 1-25 (MIKSTIALPSFFIVLILALVNSVAA) form the signal peptide. Topologically, residues 26-182 (SSSYAPVAIS…TVNSTESRLT (157 aa)) are lumenal. The 83-residue stretch at 41–123 (KECLYYDMVT…LKKVEITLEK (83 aa)) folds into the GOLD domain. A helical membrane pass occupies residues 183–203 (WLSILIIIIIAVISIAQVLLI). At 204–215 (QFLFTGRQKNYV) the chain is on the cytoplasmic side.

Belongs to the EMP24/GP25L family. Associates with EMP24, ERV25 and ERP1.

It localises to the endoplasmic reticulum membrane. Functionally, involved in vesicular protein trafficking. The sequence is that of Protein ERP2 (ERP2) from Saccharomyces cerevisiae (strain ATCC 204508 / S288c) (Baker's yeast).